A 541-amino-acid polypeptide reads, in one-letter code: Arginine--tRNA ligase (541 aa).

The 'HIGH' region signature appears at 119-129 (ANPTGPLHIGH).

The protein belongs to the class-I aminoacyl-tRNA synthetase family. As to quaternary structure, monomer.

The protein localises to the cytoplasm. It carries out the reaction tRNA(Arg) + L-arginine + ATP = L-arginyl-tRNA(Arg) + AMP + diphosphate. In Helicobacter pylori (strain J99 / ATCC 700824) (Campylobacter pylori J99), this protein is Arginine--tRNA ligase (argS).